We begin with the raw amino-acid sequence, 529 residues long: Non-reducing end alpha-L-arabinofuranosidase BoGH43B (529 aa).

Positions 1–23 (MMKNSCRLLLILIGLWMANVSLA) are cleaved as a signal peptide. The active-site Proton acceptor is Asp38. The active-site Proton donor is Glu198.

Belongs to the glycosyl hydrolase 43 family.

The protein resides in the periplasm. It carries out the reaction Hydrolysis of terminal non-reducing alpha-L-arabinofuranoside residues in alpha-L-arabinosides.. Its pathway is glucan metabolism; xyloglucan degradation. Its function is as follows. Alpha-L-arabinofuranosidase involved in xyloglucan degradation by mediating the cleavage of terminal non-reducing alpha-L-arabinofuranoside residues in xyloglucan branches, converting the 'S' units to 'X' units. The polypeptide is Non-reducing end alpha-L-arabinofuranosidase BoGH43B (Bacteroides ovatus (strain ATCC 8483 / DSM 1896 / JCM 5824 / BCRC 10623 / CCUG 4943 / NCTC 11153)).